Reading from the N-terminus, the 402-residue chain is Multidrug resistance protein MdtH (402 aa).

The Cytoplasmic portion of the chain corresponds to 1-12 (MSRVSQARNLGK). Residues 13 to 33 (YFLLIDNMLVVLGFFVVFPLI) traverse the membrane as a helical segment. At 34–98 (SIRFVDQMGW…GFATMGIAHE (65 aa)) the chain is on the periplasmic side. Residues 99 to 116 (PWLLWFSCFLSGLGGTLF) traverse the membrane as a helical segment. The Cytoplasmic segment spans residues 117–138 (DPPRSALVVKLIRPEQRGRFFS). Residues 139–159 (LLMMQDSAGAVIGALLGSWLL) form a helical membrane-spanning segment. Residues 160 to 164 (QYDFR) lie on the Periplasmic side of the membrane. A helical membrane pass occupies residues 165 to 185 (LVCATGAILFILCALFNAWLL). Topologically, residues 186–213 (PAWKLSTARTPVREGMRRVMSNKRFVTY) are cytoplasmic. The chain crosses the membrane as a helical span at residues 214 to 234 (VLTLAGYYMLAVQVMLMLPIM). Topologically, residues 235–243 (VNDIAGSPA) are periplasmic. Residues 244 to 264 (AVKWMYAIEACLSLTLLYPIA) form a helical membrane-spanning segment. The Cytoplasmic portion of the chain corresponds to 265–276 (RWSEKRFRLEHR). The helical transmembrane segment at 277-297 (LMAGLLVMSLSMLPIGMVGNL) threads the bilayer. Residues 298 to 299 (QQ) lie on the Periplasmic side of the membrane. The helical transmembrane segment at 300 to 320 (LFTLICAFYIGSVIAEPARET) threads the bilayer. At 321 to 339 (LSASPADARARGSYMGFSR) the chain is on the cytoplasmic side. A helical transmembrane segment spans residues 340–360 (LGLAIGGAISYIGGGWLFDMG). At 361 to 367 (KALAQPE) the chain is on the periplasmic side. A helical transmembrane segment spans residues 368-388 (LPWMMLGIIGFITFLALGWQF). Residues 389–402 (SHKRTPRRMLEPGA) lie on the Cytoplasmic side of the membrane.

The protein belongs to the major facilitator superfamily. DHA1 family. MdtH (TC 2.A.1.2.21) subfamily.

Its subcellular location is the cell inner membrane. The polypeptide is Multidrug resistance protein MdtH (Salmonella typhi).